Here is a 234-residue protein sequence, read N- to C-terminus: MITKTKIMMAPRKLKIARKSRFWAVNSLPGSHKKDSSIPLLIALRDYLKLGDKEREITRILTNSLVMVDGKVVKERRRGIGFMDTLTVSGNDYLVSYDRKGKLVILPKPGETKGLKLLRVKGKTYVKGGRIQISFHDGSTMVTDRKDIKNGDSVLVKIPKKEIVDVLKFAPGNRVFITGGSHVGEIATIKSIEIKSSSGENMVHMNEGFSTVSSYVFVMGSPKYTFSMPEAIAE.

An S4 RNA-binding; degenerate domain is found at 38–99 (IPLLIALRDY…GNDYLVSYDR (62 aa)).

It belongs to the eukaryotic ribosomal protein eS4 family.

This Picrophilus torridus (strain ATCC 700027 / DSM 9790 / JCM 10055 / NBRC 100828 / KAW 2/3) protein is Small ribosomal subunit protein eS4 (rps4e).